We begin with the raw amino-acid sequence, 230 residues long: Ribonuclease 3 (230 aa).

The RNase III domain maps to 1-134 (MKQLEELLST…FLGALLLDKG (134 aa)). Glutamate 47 serves as a coordination point for Mg(2+). Aspartate 51 is a catalytic residue. 2 residues coordinate Mg(2+): aspartate 120 and glutamate 123. The active site involves glutamate 123. A DRBM domain is found at 160–229 (DYKTCLQEFL…AKNALAQLSE (70 aa)).

This sequence belongs to the ribonuclease III family. As to quaternary structure, homodimer. Mg(2+) is required as a cofactor.

It is found in the cytoplasm. It catalyses the reaction Endonucleolytic cleavage to 5'-phosphomonoester.. Functionally, digests double-stranded RNA. Involved in the processing of primary rRNA transcript to yield the immediate precursors to the large and small rRNAs (23S and 16S). Processes some mRNAs, and tRNAs when they are encoded in the rRNA operon. Processes pre-crRNA and tracrRNA of type II CRISPR loci if present in the organism. This Streptococcus pyogenes serotype M3 (strain SSI-1) protein is Ribonuclease 3.